The primary structure comprises 237 residues: uncharacterized protein (237 aa).

Residues 13 to 218 (VVGLSGGVAT…KSWKPYIFRV (206 aa)) enclose the DPCK domain. 18–25 (GGVATGKS) is an ATP binding site.

The protein belongs to the CoaE family.

This is an uncharacterized protein from Caenorhabditis elegans.